Reading from the N-terminus, the 139-residue chain is Lymphocyte antigen 6H (139 aa).

A signal peptide spans 1 to 25 (MLPAAMKSLGLALLALLLCPSPAHG). One can recognise a UPAR/Ly6 domain in the interval 26–113 (LWCQDCTLAN…CEKDLCNGAS (88 aa)). Cystine bridges form between C28-C51, C31-C39, C44-C72, C76-C103, and C104-C109. N35 carries N-linked (GlcNAc...) asparagine glycosylation. N110 is lipidated: GPI-anchor amidated asparagine. The propeptide at 111–139 (GASVAGRSPWALAGGLLLSLGPALLWAGP) is removed in mature form.

Interacts with CHRNA4 and CHRNA7. In terms of tissue distribution, strongly expressed in brain, also found in lower levels in eye and reproductive tissues.

It localises to the cell membrane. In terms of biological role, believed to act as modulator of nicotinic acetylcholine receptors (nAChRs) activity. In vitro inhibits alpha-3:beta-4-containing nAChRs maximum response. In vitro inhibits alpha-3:beta-4-containing nAChRs maximum response. May play a role in the intracellular trafficking of alpha-7-containing nAChRs and may inhibit their expression at the cell surface. Seems to inhibit alpha-7/CHRNA7 signaling in hippocampal neurons. This Mus musculus (Mouse) protein is Lymphocyte antigen 6H (Ly6h).